The chain runs to 304 residues: Methionyl-tRNA formyltransferase (304 aa).

109 to 112 serves as a coordination point for (6S)-5,6,7,8-tetrahydrofolate; it reads SDLP.

This sequence belongs to the Fmt family.

The enzyme catalyses L-methionyl-tRNA(fMet) + (6R)-10-formyltetrahydrofolate = N-formyl-L-methionyl-tRNA(fMet) + (6S)-5,6,7,8-tetrahydrofolate + H(+). Its function is as follows. Attaches a formyl group to the free amino group of methionyl-tRNA(fMet). The formyl group appears to play a dual role in the initiator identity of N-formylmethionyl-tRNA by promoting its recognition by IF2 and preventing the misappropriation of this tRNA by the elongation apparatus. This chain is Methionyl-tRNA formyltransferase, found in Rickettsia bellii (strain RML369-C).